The following is a 106-amino-acid chain: Venom family 8-like peptide Pr8a (106 aa).

An N-terminal signal peptide occupies residues 1–17 (MSPIAFLLPFLLQMVLS).

In terms of processing, contains 2 disulfide bonds. As to expression, expressed by the venom gland (anterior main gland) (at protein level).

It localises to the secreted. The protein is Venom family 8-like peptide Pr8a of Platymeris rhadamanthus (Red spot assassin bug).